The sequence spans 161 residues: Putative pre-16S rRNA nuclease (161 aa).

Belongs to the YqgF nuclease family.

It is found in the cytoplasm. In terms of biological role, could be a nuclease involved in processing of the 5'-end of pre-16S rRNA. This chain is Putative pre-16S rRNA nuclease, found in Bartonella bacilliformis (strain ATCC 35685 / KC583 / Herrer 020/F12,63).